The following is a 254-amino-acid chain: UPF0246 protein lpp1320 (254 aa).

It belongs to the UPF0246 family.

This is UPF0246 protein lpp1320 from Legionella pneumophila (strain Paris).